Reading from the N-terminus, the 431-residue chain is Enolase (431 aa).

Residue Gln162 coordinates (2R)-2-phosphoglycerate. The active-site Proton donor is the Glu204. Residues Asp241, Glu288, and Asp315 each coordinate Mg(2+). The (2R)-2-phosphoglycerate site is built by Lys340, Arg369, Ser370, and Lys391. The active-site Proton acceptor is Lys340.

Belongs to the enolase family. Mg(2+) is required as a cofactor.

It is found in the cytoplasm. The protein resides in the secreted. It localises to the cell surface. It carries out the reaction (2R)-2-phosphoglycerate = phosphoenolpyruvate + H2O. It participates in carbohydrate degradation; glycolysis; pyruvate from D-glyceraldehyde 3-phosphate: step 4/5. Functionally, catalyzes the reversible conversion of 2-phosphoglycerate (2-PG) into phosphoenolpyruvate (PEP). It is essential for the degradation of carbohydrates via glycolysis. This chain is Enolase, found in Phocaeicola vulgatus (strain ATCC 8482 / DSM 1447 / JCM 5826 / CCUG 4940 / NBRC 14291 / NCTC 11154) (Bacteroides vulgatus).